The chain runs to 454 residues: 3-phosphoshikimate 1-carboxyvinyltransferase (454 aa).

3 residues coordinate 3-phosphoshikimate: Lys-39, Ser-40, and Arg-44. Lys-39 provides a ligand contact to phosphoenolpyruvate. Phosphoenolpyruvate-binding residues include Gly-112 and Arg-140. Ser-185, Gln-187, Asp-333, and Lys-360 together coordinate 3-phosphoshikimate. Gln-187 provides a ligand contact to phosphoenolpyruvate. Residue Asp-333 is the Proton acceptor of the active site. Residues Arg-364 and Arg-405 each coordinate phosphoenolpyruvate.

It belongs to the EPSP synthase family. As to quaternary structure, monomer.

The protein resides in the cytoplasm. The enzyme catalyses 3-phosphoshikimate + phosphoenolpyruvate = 5-O-(1-carboxyvinyl)-3-phosphoshikimate + phosphate. It functions in the pathway metabolic intermediate biosynthesis; chorismate biosynthesis; chorismate from D-erythrose 4-phosphate and phosphoenolpyruvate: step 6/7. Its function is as follows. Catalyzes the transfer of the enolpyruvyl moiety of phosphoenolpyruvate (PEP) to the 5-hydroxyl of shikimate-3-phosphate (S3P) to produce enolpyruvyl shikimate-3-phosphate and inorganic phosphate. This chain is 3-phosphoshikimate 1-carboxyvinyltransferase, found in Xylella fastidiosa (strain 9a5c).